Reading from the N-terminus, the 185-residue chain is Large ribosomal subunit protein bL25 (185 aa).

The protein belongs to the bacterial ribosomal protein bL25 family. CTC subfamily. Part of the 50S ribosomal subunit; part of the 5S rRNA/L5/L18/L25 subcomplex. Contacts the 5S rRNA. Binds to the 5S rRNA independently of L5 and L18.

Functionally, this is one of the proteins that binds to the 5S RNA in the ribosome where it forms part of the central protuberance. The chain is Large ribosomal subunit protein bL25 from Laribacter hongkongensis (strain HLHK9).